Here is a 237-residue protein sequence, read N- to C-terminus: Lectin alpha chain (237 aa).

The Mn(2+) site is built by glutamate 8 and aspartate 10. Residues aspartate 10, tyrosine 12, asparagine 14, and aspartate 19 each coordinate Ca(2+). Residue tyrosine 12 participates in a carbohydrate binding. Mn(2+) is bound by residues aspartate 19 and histidine 24. 99-100 lines the a carbohydrate pocket; that stretch reads LY. Aspartate 208 contributes to the Ca(2+) binding site. Arginine 228 contacts a carbohydrate.

Belongs to the leguminous lectin family. In terms of assembly, homotetramer. In terms of processing, the beta and gamma chains are produced by partial proteolytic processing of the lectin alpha chain by an asparaginyl endopeptidase.

It is found in the vacuole. Its subcellular location is the aleurone grain. Its function is as follows. D-mannose/D-glucose-binding lectin with hemagglutinating activity towards rabbit and human erythrocytes. In rats, elicits an acute inflammatory response by inducing neutrophil migration and induces dose-dependent paw edema. This chain is Lectin alpha chain, found in Macropsychanthus wilsonii (Wilson's clusterpea).